The primary structure comprises 447 residues: Beclin-2 (447 aa).

Residues 169–228 are a coiled coil; that stretch reads EALHAELCAELSSLEQEEARLTQELEDLDGHHARVAAELRAAQAESKELYKQHEQHRVEY. A required for homodimer formation region spans residues 186–256; sequence EARLTQELED…NQLTYALSQQ (71 aa).

This sequence belongs to the beclin family. As to quaternary structure, homodimer (via coiled-coil domain). Interacts (via coiled-coil domain) with ATG14 (via coiled-coil domain); this interaction is tighter than BECN2 self-association. Interacts with AMBRA1, UVRAG and PIK3C3/VPS34; these interactions are not disrupted by starvation. Does not interact with RUBCN. Interacts (via N-terminus) with GPRASP1/GASP1; the interaction is direct. Expressed in brain, skeletal muscle, placenta, thymus and uterus. Expressed at a lower level in liver, testis, stomach, and 17-day-old embryos.

It localises to the cytoplasm. Functionally, involved in 2 distinct lysosomal degradation pathways: acts as a regulator of autophagy and as a regulator of G-protein coupled receptors turnover. Regulates degradation in lysosomes of a variety of G-protein coupled receptors via its interaction with GPRASP1/GASP1. In Mus musculus (Mouse), this protein is Beclin-2.